We begin with the raw amino-acid sequence, 667 residues long: Protein OS-9 (667 aa).

The signal sequence occupies residues 1–25 (MAAETLLSSLLGLLLLGLLLPATLT). The MRH domain maps to 108-230 (APCLLKTKDW…TIRTPRLCPH (123 aa)). Cys110 and Cys123 form a disulfide bridge. 3 residues coordinate a mannooligosaccharide derivative: Trp117, Trp118, and Gln130. Residue Asn177 is glycosylated (N-linked (GlcNAc...) asparagine). Disulfide bonds link Cys181–Cys216 and Cys196–Cys228. A mannooligosaccharide derivative is bound by residues Asp182, Arg188, Glu212, and Tyr218. Disordered stretches follow at residues 262–450 (QADS…SDRE), 506–541 (EKQSPELMKKHRKRRVVPKKPPPSPQSTEEDPEHRV), and 636–667 (ERQRQKELESNYRRVWGSPGGEGTGDLDEFDF). Basic and acidic residues-rich tracts occupy residues 263-279 (ADSKQYGDRAIEGRQDP), 304-328 (ENSKESDFWKMLHEPEEQPPEKEET), and 396-408 (PSREPEMKEKGDP). The span at 410–429 (QQNEVEEEEDDEDEDEDEDE) shows a compositional bias: acidic residues. Basic and acidic residues predominate over residues 430–450 (RQLLGEFEKELEGILLPSDRE). Residues 514 to 523 (KKHRKRRVVP) are compositionally biased toward basic residues. Basic and acidic residues predominate over residues 636–647 (ERQRQKELESNY).

The protein belongs to the OS-9 family. In terms of assembly, component of the HRD1 complex, which comprises at least SYNV1/HRD1, DERL1/2, FAM8A1, HERPUD1/HERP, OS9, SEL1L and UBE2J1. FAM8A1 is stabilized by interaction with SYNV1, which prevents its proteasomal degradation. OS9 and UBE2J1 recruitment to the complex may be mediated by SEL1L. Through this complex, may interact with ERLEC1 and HSPA5. Interacts (via C-terminus) with CPNE6 (via second C2 domain); this interaction occurs in a calcium-dependent manner in vitro. Interacts with CREB3. In terms of processing, intramolecular disulfide bonds.

It localises to the endoplasmic reticulum lumen. Lectin component of the HRD1 complex, which functions in endoplasmic reticulum (ER) quality control and ER-associated degradation (ERAD). Specifically recognizes and binds improperly folded glycoproteins as well as hyperglycosylated proteins, retain them in the ER, and transfers them to the ubiquitination machinery and promote their degradation. Possible targets include TRPV4 as well as hyperglycosylated HSP90B1. This Bos taurus (Bovine) protein is Protein OS-9 (OS9).